Consider the following 274-residue polypeptide: Rhamnulose-1-phosphate aldolase (274 aa).

The active site involves glutamate 117. Zn(2+) is bound by residues histidine 141, histidine 143, and histidine 212.

It belongs to the aldolase class II family. RhaD subfamily. In terms of assembly, homotetramer. Zn(2+) serves as cofactor.

The protein localises to the cytoplasm. The catalysed reaction is L-rhamnulose 1-phosphate = (S)-lactaldehyde + dihydroxyacetone phosphate. It functions in the pathway carbohydrate degradation; L-rhamnose degradation; glycerone phosphate from L-rhamnose: step 3/3. In terms of biological role, catalyzes the reversible cleavage of L-rhamnulose-1-phosphate to dihydroxyacetone phosphate (DHAP) and L-lactaldehyde. In Escherichia coli O81 (strain ED1a), this protein is Rhamnulose-1-phosphate aldolase.